The primary structure comprises 198 residues: Adenylate kinase (198 aa).

10–15 contacts ATP; sequence GAGKGT. An NMP region spans residues 30-59; sequence STGDMLRAAVQAGSEVGKRAKAVMDAGELV. AMP is bound by residues T31, R36, 57–59, 85–88, and Q92; these read ELV and GYPR. An LID region spans residues 126–142; that stretch reads KRAEDAKAAGQPVRKDD. R127 contributes to the ATP binding site. AMP-binding residues include R139 and R150. A178 contacts ATP.

It belongs to the adenylate kinase family. As to quaternary structure, monomer.

The protein localises to the cytoplasm. It catalyses the reaction AMP + ATP = 2 ADP. It participates in purine metabolism; AMP biosynthesis via salvage pathway; AMP from ADP: step 1/1. Catalyzes the reversible transfer of the terminal phosphate group between ATP and AMP. Plays an important role in cellular energy homeostasis and in adenine nucleotide metabolism. This chain is Adenylate kinase, found in Mesorhizobium japonicum (strain LMG 29417 / CECT 9101 / MAFF 303099) (Mesorhizobium loti (strain MAFF 303099)).